The primary structure comprises 839 residues: Glycerol-3-phosphate acyltransferase (839 aa).

The HXXXXD motif signature appears at 309–314 (CHRSHI).

The protein belongs to the GPAT/DAPAT family.

Its subcellular location is the cell inner membrane. It carries out the reaction sn-glycerol 3-phosphate + an acyl-CoA = a 1-acyl-sn-glycero-3-phosphate + CoA. It functions in the pathway phospholipid metabolism; CDP-diacylglycerol biosynthesis; CDP-diacylglycerol from sn-glycerol 3-phosphate: step 1/3. The sequence is that of Glycerol-3-phosphate acyltransferase from Pseudomonas fluorescens (strain SBW25).